A 609-amino-acid polypeptide reads, in one-letter code: uncharacterized protein (609 aa).

Belongs to the NodU/CmcH family.

This is an uncharacterized protein from Methanocaldococcus jannaschii (strain ATCC 43067 / DSM 2661 / JAL-1 / JCM 10045 / NBRC 100440) (Methanococcus jannaschii).